Here is a 259-residue protein sequence, read N- to C-terminus: Protein CWC15 homolog (259 aa).

The interval 1–182 (MTTAARPTFD…EKKQEDERIR (182 aa)) is disordered. Positions 52–71 (DENRNRDFRKELEEREREAR) are enriched in basic and acidic residues. 2 stretches are compositionally biased toward low complexity: residues 72-82 (SGTGATSSSSG) and 114-126 (QQQA…QQAA). The span at 129 to 150 (DADEPLDNDSSDSDSDSDDDDA) shows a compositional bias: acidic residues. A coiled-coil region spans residues 150 to 182 (AALLAELQKIKQERLQETARRESEKKQEDERIR). Basic and acidic residues predominate over residues 157-182 (QKIKQERLQETARRESEKKQEDERIR).

The protein belongs to the CWC15 family.

Involved in pre-mRNA splicing. In Drosophila melanogaster (Fruit fly), this protein is Protein CWC15 homolog (c12.1).